A 222-amino-acid polypeptide reads, in one-letter code: Holliday junction branch migration complex subunit RuvA (222 aa).

Residues 1 to 67 (MISWLNGLKI…EDGSQLIGFL (67 aa)) are domain I. The segment at 68–146 (NKLERDLFRK…DLIGSSLKKT (79 aa)) is domain II. The flexible linker stretch occupies residues 147 to 155 (NNHLELEYE). The segment at 155-222 (ETNVADEVRS…TLIRINTESG (68 aa)) is domain III.

It belongs to the RuvA family. In terms of assembly, homotetramer. Forms an RuvA(8)-RuvB(12)-Holliday junction (HJ) complex. HJ DNA is sandwiched between 2 RuvA tetramers; dsDNA enters through RuvA and exits via RuvB. An RuvB hexamer assembles on each DNA strand where it exits the tetramer. Each RuvB hexamer is contacted by two RuvA subunits (via domain III) on 2 adjacent RuvB subunits; this complex drives branch migration. In the full resolvosome a probable DNA-RuvA(4)-RuvB(12)-RuvC(2) complex forms which resolves the HJ.

The protein localises to the cytoplasm. Its function is as follows. The RuvA-RuvB-RuvC complex processes Holliday junction (HJ) DNA during genetic recombination and DNA repair, while the RuvA-RuvB complex plays an important role in the rescue of blocked DNA replication forks via replication fork reversal (RFR). RuvA specifically binds to HJ cruciform DNA, conferring on it an open structure. The RuvB hexamer acts as an ATP-dependent pump, pulling dsDNA into and through the RuvAB complex. HJ branch migration allows RuvC to scan DNA until it finds its consensus sequence, where it cleaves and resolves the cruciform DNA. The chain is Holliday junction branch migration complex subunit RuvA from Prochlorococcus marinus (strain SARG / CCMP1375 / SS120).